We begin with the raw amino-acid sequence, 265 residues long: UDP-N-acetylenolpyruvoylglucosamine reductase (265 aa).

An FAD-binding PCMH-type domain is found at 15–169 (GVGGPAELWT…TRVRLKLKER (155 aa)). Arginine 149 is a catalytic residue. The segment at 182-203 (DRARKGQPKRKSAGCAFKNPPG) is disordered. Cysteine 196 functions as the Proton donor in the catalytic mechanism.

The protein belongs to the MurB family. FAD serves as cofactor.

It localises to the cytoplasm. It catalyses the reaction UDP-N-acetyl-alpha-D-muramate + NADP(+) = UDP-N-acetyl-3-O-(1-carboxyvinyl)-alpha-D-glucosamine + NADPH + H(+). It functions in the pathway cell wall biogenesis; peptidoglycan biosynthesis. In terms of biological role, cell wall formation. This chain is UDP-N-acetylenolpyruvoylglucosamine reductase, found in Thermus thermophilus (strain ATCC BAA-163 / DSM 7039 / HB27).